The following is a 180-amino-acid chain: Ribosome maturation factor RimM (180 aa).

The 73-residue stretch at 97–169 (PGELSWDFFV…IITVDLPEGL (73 aa)) folds into the PRC barrel domain.

The protein belongs to the RimM family. Binds ribosomal protein uS19.

The protein localises to the cytoplasm. Its function is as follows. An accessory protein needed during the final step in the assembly of 30S ribosomal subunit, possibly for assembly of the head region. Essential for efficient processing of 16S rRNA. May be needed both before and after RbfA during the maturation of 16S rRNA. It has affinity for free ribosomal 30S subunits but not for 70S ribosomes. In Bacteroides fragilis (strain YCH46), this protein is Ribosome maturation factor RimM.